The following is a 244-amino-acid chain: tRNA (guanine-N(1)-)-methyltransferase (244 aa).

S-adenosyl-L-methionine-binding positions include G123 and 143 to 148; that span reads LGDFVM.

It belongs to the RNA methyltransferase TrmD family. As to quaternary structure, homodimer.

It is found in the cytoplasm. It carries out the reaction guanosine(37) in tRNA + S-adenosyl-L-methionine = N(1)-methylguanosine(37) in tRNA + S-adenosyl-L-homocysteine + H(+). Specifically methylates guanosine-37 in various tRNAs. The protein is tRNA (guanine-N(1)-)-methyltransferase of Ruegeria sp. (strain TM1040) (Silicibacter sp.).